Consider the following 349-residue polypeptide: tRNA pseudouridine synthase D (349 aa).

Phe-27 serves as a coordination point for substrate. The Nucleophile role is filled by Asp-80. Asn-129 is a binding site for substrate. Positions 155–303 (GVPNYFGAQR…VEAARRAMLL (149 aa)) constitute a TRUD domain. Phe-329 contributes to the substrate binding site.

This sequence belongs to the pseudouridine synthase TruD family.

The enzyme catalyses uridine(13) in tRNA = pseudouridine(13) in tRNA. In terms of biological role, responsible for synthesis of pseudouridine from uracil-13 in transfer RNAs. In Escherichia coli (strain K12 / MC4100 / BW2952), this protein is tRNA pseudouridine synthase D.